Consider the following 285-residue polypeptide: NADPH-dependent 7-cyano-7-deazaguanine reductase (285 aa).

Position 91-93 (91-93 (IES)) interacts with substrate. Position 93-94 (93-94 (SK)) interacts with NADPH. C193 (thioimide intermediate) is an active-site residue. The active-site Proton donor is the D200. 232-233 (HE) is a binding site for substrate. Position 261–262 (261–262 (RG)) interacts with NADPH.

Belongs to the GTP cyclohydrolase I family. QueF type 2 subfamily. As to quaternary structure, homodimer.

Its subcellular location is the cytoplasm. It catalyses the reaction 7-aminomethyl-7-carbaguanine + 2 NADP(+) = 7-cyano-7-deazaguanine + 2 NADPH + 3 H(+). Its pathway is tRNA modification; tRNA-queuosine biosynthesis. Functionally, catalyzes the NADPH-dependent reduction of 7-cyano-7-deazaguanine (preQ0) to 7-aminomethyl-7-deazaguanine (preQ1). The sequence is that of NADPH-dependent 7-cyano-7-deazaguanine reductase from Shewanella frigidimarina (strain NCIMB 400).